The following is a 61-amino-acid chain: Weak toxin CM-2 (61 aa).

4 disulfides stabilise this stretch: Cys3-Cys21, Cys14-Cys37, Cys41-Cys53, and Cys54-Cys59.

Belongs to the three-finger toxin family. Short-chain subfamily. Orphan group VI sub-subfamily. As to expression, expressed by the venom gland.

Its subcellular location is the secreted. The polypeptide is Weak toxin CM-2 (Naja haje haje (Egyptian cobra)).